The primary structure comprises 622 residues: Low affinity potassium transport system protein Kup (622 aa).

12 helical membrane passes run 9 to 29, 49 to 69, 103 to 123, 137 to 157, 165 to 185, 213 to 233, 247 to 267, 276 to 296, 337 to 357, 363 to 383, 396 to 416, and 419 to 439; these read LPAITLAAIGVVYGDIGTSPL, VFGFLSLIFWLLIFVVSIKYL, VIMGLIGGSFFYGEVVITPAI, PQLDTWIVPLSIIVLTLLFMI, VGKLFAPIMLTWFLILAGLGL, VSFIALGAVVLSITGVEALYA, WFTVVLPSLTLNYFGQGALLL, PFFLLAPDWALIPLLIIAALA, IYIPFVNWMLYVAVVIVIVSF, LAAAYGIAVTGTMVLTSILST, FVALILIAFLCVDIPLFTANL, and LLSGGWLPLSLGTVMFIVMTT.

This sequence belongs to the HAK/KUP transporter (TC 2.A.72) family.

It localises to the cell inner membrane. It catalyses the reaction K(+)(in) + H(+)(in) = K(+)(out) + H(+)(out). Functionally, responsible for the low-affinity transport of potassium into the cell. Likely operates as a K(+):H(+) symporter. This is Low affinity potassium transport system protein Kup from Escherichia coli (strain K12 / MC4100 / BW2952).